The sequence spans 135 residues: Holo-[acyl-carrier-protein] synthase (135 aa).

Residues D8 and E57 each contribute to the Mg(2+) site.

The protein belongs to the P-Pant transferase superfamily. AcpS family. Mg(2+) serves as cofactor.

It localises to the cytoplasm. The enzyme catalyses apo-[ACP] + CoA = holo-[ACP] + adenosine 3',5'-bisphosphate + H(+). Its function is as follows. Transfers the 4'-phosphopantetheine moiety from coenzyme A to a Ser of acyl-carrier-protein. The chain is Holo-[acyl-carrier-protein] synthase from Methylobacterium sp. (strain 4-46).